A 209-amino-acid chain; its full sequence is Glycerol-3-phosphate acyltransferase (209 aa).

5 helical membrane passes run 13 to 33 (ALIA…GLLL), 63 to 83 (LAAA…LIAQ), 94 to 114 (PGLL…WLGF), 127 to 147 (LLGI…SIAF), and 151 to 171 (YSSL…WILG).

This sequence belongs to the PlsY family. In terms of assembly, probably interacts with PlsX.

It localises to the cell inner membrane. The catalysed reaction is an acyl phosphate + sn-glycerol 3-phosphate = a 1-acyl-sn-glycero-3-phosphate + phosphate. The protein operates within lipid metabolism; phospholipid metabolism. In terms of biological role, catalyzes the transfer of an acyl group from acyl-phosphate (acyl-PO(4)) to glycerol-3-phosphate (G3P) to form lysophosphatidic acid (LPA). This enzyme utilizes acyl-phosphate as fatty acyl donor, but not acyl-CoA or acyl-ACP. The chain is Glycerol-3-phosphate acyltransferase from Allorhizobium ampelinum (strain ATCC BAA-846 / DSM 112012 / S4) (Agrobacterium vitis (strain S4)).